The sequence spans 165 residues: Ribosome maturation factor RimM (165 aa).

One can recognise a PRC barrel domain in the interval 94 to 165 (EDEFYIADLT…YVILNYQREA (72 aa)).

This sequence belongs to the RimM family. In terms of assembly, binds ribosomal protein uS19.

It is found in the cytoplasm. In terms of biological role, an accessory protein needed during the final step in the assembly of 30S ribosomal subunit, possibly for assembly of the head region. Essential for efficient processing of 16S rRNA. May be needed both before and after RbfA during the maturation of 16S rRNA. It has affinity for free ribosomal 30S subunits but not for 70S ribosomes. This Rickettsia conorii (strain ATCC VR-613 / Malish 7) protein is Ribosome maturation factor RimM.